A 422-amino-acid chain; its full sequence is Serine--tRNA ligase (422 aa).

Position 231–233 (231–233 (TAE)) interacts with L-serine. Residue 261-263 (RSE) coordinates ATP. Glu-284 lines the L-serine pocket. ATP is bound at residue 348 to 351 (EISS). Ser-383 is a binding site for L-serine.

Belongs to the class-II aminoacyl-tRNA synthetase family. Type-1 seryl-tRNA synthetase subfamily. In terms of assembly, homodimer. The tRNA molecule binds across the dimer.

The protein localises to the cytoplasm. The catalysed reaction is tRNA(Ser) + L-serine + ATP = L-seryl-tRNA(Ser) + AMP + diphosphate + H(+). It catalyses the reaction tRNA(Sec) + L-serine + ATP = L-seryl-tRNA(Sec) + AMP + diphosphate + H(+). It participates in aminoacyl-tRNA biosynthesis; selenocysteinyl-tRNA(Sec) biosynthesis; L-seryl-tRNA(Sec) from L-serine and tRNA(Sec): step 1/1. Catalyzes the attachment of serine to tRNA(Ser). Is also able to aminoacylate tRNA(Sec) with serine, to form the misacylated tRNA L-seryl-tRNA(Sec), which will be further converted into selenocysteinyl-tRNA(Sec). The sequence is that of Serine--tRNA ligase from Mycoplasmopsis agalactiae (strain NCTC 10123 / CIP 59.7 / PG2) (Mycoplasma agalactiae).